Here is a 150-residue protein sequence, read N- to C-terminus: Large ribosomal subunit protein uL23m (150 aa).

It belongs to the universal ribosomal protein uL23 family. As to quaternary structure, component of the mitochondrial ribosome large subunit (39S) which comprises a 16S rRNA and about 50 distinct proteins.

The protein resides in the mitochondrion. In Drosophila melanogaster (Fruit fly), this protein is Large ribosomal subunit protein uL23m (mRpL23).